Consider the following 464-residue polypeptide: NADH-quinone oxidoreductase subunit N 2 (464 aa).

14 helical membrane-spanning segments follow: residues 12–32 (VGII…LIGF), 33–53 (LGFL…LAGY), 62–82 (INAF…FVIF), 93–113 (TFVE…IMVS), 117–137 (LAVI…SVGM), 152–172 (LVLG…YIGA), 189–209 (FALA…AAPF), 227–247 (FIST…ASYI), 254–274 (FSYI…LVAY), 282–304 (MLAY…YNPL), 310–330 (IFYV…LSIL), 351–371 (PFLA…PPFA), 400–420 (IIAA…EPAT), and 434–454 (IGIS…NILF).

Belongs to the complex I subunit 2 family. As to quaternary structure, NDH-1 is composed of 14 different subunits. Subunits NuoA, H, J, K, L, M, N constitute the membrane sector of the complex.

The protein localises to the cell inner membrane. It catalyses the reaction a quinone + NADH + 5 H(+)(in) = a quinol + NAD(+) + 4 H(+)(out). In terms of biological role, NDH-1 shuttles electrons from NADH, via FMN and iron-sulfur (Fe-S) centers, to quinones in the respiratory chain. The immediate electron acceptor for the enzyme in this species is believed to be ubiquinone. Couples the redox reaction to proton translocation (for every two electrons transferred, four hydrogen ions are translocated across the cytoplasmic membrane), and thus conserves the redox energy in a proton gradient. The chain is NADH-quinone oxidoreductase subunit N 2 from Hydrogenobaculum sp. (strain Y04AAS1).